A 190-amino-acid chain; its full sequence is Large ribosomal subunit protein bL9 (190 aa).

The protein belongs to the bacterial ribosomal protein bL9 family.

In terms of biological role, binds to the 23S rRNA. The polypeptide is Large ribosomal subunit protein bL9 (Methylobacterium radiotolerans (strain ATCC 27329 / DSM 1819 / JCM 2831 / NBRC 15690 / NCIMB 10815 / 0-1)).